We begin with the raw amino-acid sequence, 571 residues long: Urease subunit alpha (571 aa).

Residues 133-571 (GGIDTHVHFI…LPLAQRYFLF (439 aa)) form the Urease domain. Ni(2+)-binding residues include His-138, His-140, and Lys-221. An N6-carboxylysine modification is found at Lys-221. His-223 contacts substrate. Ni(2+) is bound by residues His-250 and His-276. The active-site Proton donor is His-324. Asp-364 lines the Ni(2+) pocket.

Belongs to the metallo-dependent hydrolases superfamily. Urease alpha subunit family. As to quaternary structure, heterotrimer of UreA (gamma), UreB (beta) and UreC (alpha) subunits. Three heterotrimers associate to form the active enzyme. Ni cation serves as cofactor. Post-translationally, carboxylation allows a single lysine to coordinate two nickel ions.

The protein localises to the cytoplasm. The enzyme catalyses urea + 2 H2O + H(+) = hydrogencarbonate + 2 NH4(+). It functions in the pathway nitrogen metabolism; urea degradation; CO(2) and NH(3) from urea (urease route): step 1/1. The sequence is that of Urease subunit alpha from Staphylococcus carnosus (strain TM300).